The primary structure comprises 421 residues: Imidazolonepropionase (421 aa).

Fe(3+) is bound by residues histidine 80 and histidine 82. Residues histidine 80 and histidine 82 each contribute to the Zn(2+) site. 4-imidazolone-5-propanoate is bound by residues arginine 89, tyrosine 152, and histidine 185. Tyrosine 152 is an N-formimidoyl-L-glutamate binding site. Histidine 249 lines the Fe(3+) pocket. Histidine 249 is a binding site for Zn(2+). Glutamate 252 serves as a coordination point for 4-imidazolone-5-propanoate. Aspartate 324 is a binding site for Fe(3+). Aspartate 324 serves as a coordination point for Zn(2+). N-formimidoyl-L-glutamate is bound by residues asparagine 326 and glycine 328. Serine 329 is a binding site for 4-imidazolone-5-propanoate.

This sequence belongs to the metallo-dependent hydrolases superfamily. HutI family. It depends on Zn(2+) as a cofactor. Fe(3+) is required as a cofactor.

The protein localises to the cytoplasm. It catalyses the reaction 4-imidazolone-5-propanoate + H2O = N-formimidoyl-L-glutamate. It participates in amino-acid degradation; L-histidine degradation into L-glutamate; N-formimidoyl-L-glutamate from L-histidine: step 3/3. Its function is as follows. Catalyzes the hydrolytic cleavage of the carbon-nitrogen bond in imidazolone-5-propanoate to yield N-formimidoyl-L-glutamate. It is the third step in the universal histidine degradation pathway. This is Imidazolonepropionase from Bacillus velezensis (strain DSM 23117 / BGSC 10A6 / LMG 26770 / FZB42) (Bacillus amyloliquefaciens subsp. plantarum).